A 224-amino-acid chain; its full sequence is uncharacterized protein (224 aa).

The interval 203-224 is disordered; the sequence is ELKKKKKKKIKKPKEIRNQKNV. Over residues 204–214 the composition is skewed to basic residues; the sequence is LKKKKKKKIKK. A compositionally biased stretch (basic and acidic residues) spans 215-224; the sequence is PKEIRNQKNV.

This is an uncharacterized protein from Mycoplasma genitalium (strain ATCC 33530 / DSM 19775 / NCTC 10195 / G37) (Mycoplasmoides genitalium).